We begin with the raw amino-acid sequence, 457 residues long: Chromosomal replication initiator protein DnaA (457 aa).

The segment at 1–75 (MDAQLNNLWE…ALKIVTSRKF (75 aa)) is domain I, interacts with DnaA modulators. A domain II region spans residues 75-118 (FKIEFYLESDLEEEKENEEKQKEEKKDNTNDVDGSIVVSDEMSA). The segment at 87–108 (EEKENEEKQKEEKKDNTNDVDG) is disordered. Residues 91-103 (NEEKQKEEKKDNT) show a composition bias toward basic and acidic residues. The tract at residues 119–335 (TLNPKYTFQS…GALIRIIAYS (217 aa)) is domain III, AAA+ region. ATP contacts are provided by Gly163, Gly165, Lys166, and Thr167. The segment at 336 to 457 (SLTNRDVSVD…NDITKKLTQK (122 aa)) is domain IV, binds dsDNA.

Belongs to the DnaA family. In terms of assembly, oligomerizes as a right-handed, spiral filament on DNA at oriC.

The protein localises to the cytoplasm. Plays an essential role in the initiation and regulation of chromosomal replication. ATP-DnaA binds to the origin of replication (oriC) to initiate formation of the DNA replication initiation complex once per cell cycle. Binds the DnaA box (a 9 base pair repeat at the origin) and separates the double-stranded (ds)DNA. Forms a right-handed helical filament on oriC DNA; dsDNA binds to the exterior of the filament while single-stranded (ss)DNA is stabiized in the filament's interior. The ATP-DnaA-oriC complex binds and stabilizes one strand of the AT-rich DNA unwinding element (DUE), permitting loading of DNA polymerase. After initiation quickly degrades to an ADP-DnaA complex that is not apt for DNA replication. Binds acidic phospholipids. This Clostridium perfringens (strain SM101 / Type A) protein is Chromosomal replication initiator protein DnaA.